A 640-amino-acid polypeptide reads, in one-letter code: Insulin-like growth factor 1 receptor (640 aa).

Fibronectin type-III domains lie at 5–101 (VPRP…TMPA) and 107–200 (IPGP…VQAK). At 14–208 (EVMQIANTTM…AKTTYENFIH (195 aa)) the chain is on the extracellular side. Residues asparagine 20, asparagine 29, asparagine 37, asparagine 173, and asparagine 186 are each glycosylated (N-linked (GlcNAc...) asparagine). The helical transmembrane segment at 209-232 (LMIALPIAVLLIVGGLVIMLYVFH) threads the bilayer. At 233–640 (RKRNSSRLGN…ALPLPQSSTC (408 aa)) the chain is on the cytoplasmic side. The short motif at 250–253 (NPEY) is the IRS1- and SHC1-binding element. The residue at position 253 (tyrosine 253) is a Phosphotyrosine. The region spanning 272 to 547 (ITMSRELGQG…SVKDEMEAGF (276 aa)) is the Protein kinase domain. Residues 278–286 (LGQGSFGMV) and lysine 306 each bind ATP. Aspartate 408 functions as the Proton acceptor in the catalytic mechanism. Tyrosine 434, tyrosine 438, and tyrosine 439 each carry phosphotyrosine; by autocatalysis. Residues lysine 441 and lysine 444 each participate in a glycyl lysine isopeptide (Lys-Gly) (interchain with G-Cter in ubiquitin) cross-link. Serine 551 is modified (phosphoserine; by GSK3-beta). Serine 555 carries the phosphoserine modification. The disordered stretch occupies residues 555–640 (SEENKPPEPE…ALPLPQSSTC (86 aa)). Acidic residues predominate over residues 563 to 572 (PEELDLEPEN). Low complexity predominate over residues 573 to 589 (MESVPLDPSASSASLPL). Basic and acidic residues predominate over residues 590 to 599 (PDRHSGHKAE).

This sequence belongs to the protein kinase superfamily. Tyr protein kinase family. Insulin receptor subfamily. In terms of assembly, tetramer of 2 alpha and 2 beta chains linked by disulfide bonds. The alpha chains contribute to the formation of the ligand-binding domain, while the beta chain carries the kinase domain. Interacts with PIK3R1 and with the PTB/PID domains of IRS1 and SHC1 in vitro when autophosphorylated on tyrosine residues. Forms a hybrid receptor with INSR, the hybrid is a tetramer consisting of 1 alpha chain and 1 beta chain of INSR and 1 alpha chain and 1 beta chain of IGF1R. Interacts with ARRB1 and ARRB2. Interacts with GRB10. Interacts with RACK1. Interacts with SOCS1, SOCS2 and SOCS3. Interacts with 14-3-3 proteins. Interacts with NMD2. Interacts with MAP3K5. Interacts with STAT3. Interacts (nascent precursor form) with ZFAND2B. Autophosphorylated on tyrosine residues in response to ligand binding. Autophosphorylation occurs in trans, i.e. one subunit of the dimeric receptor phosphorylates tyrosine residues on the other subunit. Autophosphorylation occurs in a sequential manner; Tyr-438 is predominantly phosphorylated first, followed by phosphorylation of Tyr-434 and Tyr-439. While every single phosphorylation increases kinase activity, all three tyrosine residues in the kinase activation loop (Tyr-438, Tyr-434 and Tyr-439) have to be phosphorylated for optimal activity. Can be autophosphorylated at additional tyrosine residues (in vitro). Autophosphorylated is followed by phosphorylation of juxtamembrane tyrosines and C-terminal serines. May also be phosphorylated at Tyr-434 and Tyr-439 by mTORC2. Phosphorylation of Tyr-253 is required for IRS1- and SHC1-binding. Phosphorylation of Ser-551 by GSK-3beta restrains kinase activity and promotes cell surface expression, it requires a priming phosphorylation at Ser-555. Dephosphorylated by PTPN1. In terms of processing, polyubiquitinated at Lys-441 and Lys-444 through both 'Lys-48' and 'Lys-29' linkages, promoting receptor endocytosis and subsequent degradation by the proteasome. Ubiquitination is facilitated by pre-existing phosphorylation. Post-translationally, sumoylated with SUMO1. Controlled by regulated intramembrane proteolysis (RIP). Undergoes metalloprotease-dependent constitutive ectodomain shedding to produce a membrane-anchored 52 kDa C-Terminal fragment which is further processed by presenilin gamma-secretase to yield an intracellular 50 kDa fragment.

Its subcellular location is the cell membrane. It carries out the reaction L-tyrosyl-[protein] + ATP = O-phospho-L-tyrosyl-[protein] + ADP + H(+). Activated by autophosphorylation at Tyr-434, Tyr-438 and Tyr-439 on the kinase activation loop; phosphorylation at all three tyrosine residues is required for optimal kinase activity. Inhibited by MSC1609119A-1, BMS-754807, PQIP, benzimidazole pyridinone, isoquinolinedione, bis-azaindole, 3-cyanoquinoline, 2,4-bis-arylamino-1,3-pyrimidine, pyrrolopyrimidine, pyrrole-5-carboxaldehyde, picropodophyllin (PPP), tyrphostin derivatives. While most inhibitors bind to the ATP binding pocket, MSC1609119A-1 functions as allosteric inhibitor and binds close to the DFG motif and the activation loop. Its function is as follows. Receptor tyrosine kinase which mediates actions of insulin-like growth factor 1 (IGF1). Binds IGF1 with high affinity and IGF2 and insulin (INS) with a lower affinity. The activated IGF1R is involved in cell growth and survival control. IGF1R is crucial for tumor transformation and survival of malignant cell. Ligand binding activates the receptor kinase, leading to receptor autophosphorylation, and tyrosines phosphorylation of multiple substrates, that function as signaling adapter proteins including, the insulin-receptor substrates (IRS1/2), Shc and 14-3-3 proteins. Phosphorylation of IRSs proteins lead to the activation of two main signaling pathways: the PI3K-AKT/PKB pathway and the Ras-MAPK pathway. The result of activating the MAPK pathway is increased cellular proliferation, whereas activating the PI3K pathway inhibits apoptosis and stimulates protein synthesis. Phosphorylated IRS1 can activate the 85 kDa regulatory subunit of PI3K (PIK3R1), leading to activation of several downstream substrates, including protein AKT/PKB. AKT phosphorylation, in turn, enhances protein synthesis through mTOR activation and triggers the antiapoptotic effects of IGFIR through phosphorylation and inactivation of BAD. In parallel to PI3K-driven signaling, recruitment of Grb2/SOS by phosphorylated IRS1 or Shc leads to recruitment of Ras and activation of the ras-MAPK pathway. In addition to these two main signaling pathways IGF1R signals also through the Janus kinase/signal transducer and activator of transcription pathway (JAK/STAT). Phosphorylation of JAK proteins can lead to phosphorylation/activation of signal transducers and activators of transcription (STAT) proteins. In particular activation of STAT3, may be essential for the transforming activity of IGF1R. The JAK/STAT pathway activates gene transcription and may be responsible for the transforming activity. JNK kinases can also be activated by the IGF1R. IGF1 exerts inhibiting activities on JNK activation via phosphorylation and inhibition of MAP3K5/ASK1, which is able to directly associate with the IGF1R. When present in a hybrid receptor with INSR, binds IGF1. The sequence is that of Insulin-like growth factor 1 receptor (IGF1R) from Bos taurus (Bovine).